A 161-amino-acid polypeptide reads, in one-letter code: UPF0262 protein Rru_A2770 (161 aa).

Belongs to the UPF0262 family.

The polypeptide is UPF0262 protein Rru_A2770 (Rhodospirillum rubrum (strain ATCC 11170 / ATH 1.1.1 / DSM 467 / LMG 4362 / NCIMB 8255 / S1)).